A 565-amino-acid polypeptide reads, in one-letter code: Oxygen-dependent choline dehydrogenase (565 aa).

6–35 (DYIIVGAGSAGNTLATRLTEDAGVTVLLLE) serves as a coordination point for FAD. His475 acts as the Proton acceptor in catalysis.

This sequence belongs to the GMC oxidoreductase family. It depends on FAD as a cofactor.

The enzyme catalyses choline + A = betaine aldehyde + AH2. It catalyses the reaction betaine aldehyde + NAD(+) + H2O = glycine betaine + NADH + 2 H(+). The protein operates within amine and polyamine biosynthesis; betaine biosynthesis via choline pathway; betaine aldehyde from choline (cytochrome c reductase route): step 1/1. Its function is as follows. Involved in the biosynthesis of the osmoprotectant glycine betaine. Catalyzes the oxidation of choline to betaine aldehyde and betaine aldehyde to glycine betaine at the same rate. The polypeptide is Oxygen-dependent choline dehydrogenase (Pseudomonas putida (strain GB-1)).